The sequence spans 297 residues: 33 kDa chaperonin (297 aa).

Disulfide bonds link Cys-239/Cys-241 and Cys-272/Cys-275.

The protein belongs to the HSP33 family. Under oxidizing conditions two disulfide bonds are formed involving the reactive cysteines. Under reducing conditions zinc is bound to the reactive cysteines and the protein is inactive.

Its subcellular location is the cytoplasm. Redox regulated molecular chaperone. Protects both thermally unfolding and oxidatively damaged proteins from irreversible aggregation. Plays an important role in the bacterial defense system toward oxidative stress. In Clostridium acetobutylicum (strain ATCC 824 / DSM 792 / JCM 1419 / IAM 19013 / LMG 5710 / NBRC 13948 / NRRL B-527 / VKM B-1787 / 2291 / W), this protein is 33 kDa chaperonin.